The following is a 279-amino-acid chain: Tryptophan 2,3-dioxygenase (279 aa).

Residues 48 to 52 (FIVIH), Y110, and R114 contribute to the substrate site. Residue H237 coordinates heme. Substrate is bound at residue T251.

Belongs to the tryptophan 2,3-dioxygenase family. In terms of assembly, homotetramer. Heme is required as a cofactor.

It catalyses the reaction L-tryptophan + O2 = N-formyl-L-kynurenine. It participates in amino-acid degradation; L-tryptophan degradation via kynurenine pathway; L-kynurenine from L-tryptophan: step 1/2. Its function is as follows. Heme-dependent dioxygenase that catalyzes the oxidative cleavage of the L-tryptophan (L-Trp) pyrrole ring and converts L-tryptophan to N-formyl-L-kynurenine. Catalyzes the oxidative cleavage of the indole moiety. The sequence is that of Tryptophan 2,3-dioxygenase from Bacillus cereus (strain ATCC 10987 / NRS 248).